We begin with the raw amino-acid sequence, 75 residues long: Guanine nucleotide-binding protein G(I)/G(S)/G(O) subunit gamma-4 (75 aa).

Cysteine 72 carries the post-translational modification Cysteine methyl ester. A lipid anchor (S-geranylgeranyl cysteine) is attached at cysteine 72. The propeptide at 73–75 is removed in mature form; it reads TIL.

It belongs to the G protein gamma family. G proteins are composed of 3 units, alpha, beta and gamma. Interacts with beta-1 and beta-2, but not with beta-3. Interacts with KCNK1. Interacts (via C-terminus) with KCNK2/TREK-1 (via N-terminus); this interaction confers ion selectivity to Cl(-) and L-glutamate. Brain, kidney, pancreas, skeletal muscle and faintly in cardiac muscle.

The protein resides in the cell membrane. Its function is as follows. Guanine nucleotide-binding proteins (G proteins) are involved as a modulator or transducer in various transmembrane signaling systems. The beta and gamma chains are required for the GTPase activity, for replacement of GDP by GTP, and for G protein-effector interaction. In Homo sapiens (Human), this protein is Guanine nucleotide-binding protein G(I)/G(S)/G(O) subunit gamma-4 (GNG4).